Reading from the N-terminus, the 157-residue chain is Protein Smg homolog (157 aa).

The protein belongs to the Smg family.

This is Protein Smg homolog from Shewanella halifaxensis (strain HAW-EB4).